Here is a 351-residue protein sequence, read N- to C-terminus: Large ribosomal subunit protein uL3 (351 aa).

Disordered stretches follow at residues 1–31 (MGHRKLASPRRGSAGLRPRKRSSELLPTPRT) and 246–271 (KGSRKIGTRGPSLGTPSYTPQPGQLG).

The protein belongs to the universal ribosomal protein uL3 family. As to quaternary structure, part of the 50S ribosomal subunit. Forms a cluster with proteins L14 and L24e.

One of the primary rRNA binding proteins, it binds directly near the 3'-end of the 23S rRNA, where it nucleates assembly of the 50S subunit. The polypeptide is Large ribosomal subunit protein uL3 (Saccharolobus islandicus (strain M.14.25 / Kamchatka #1) (Sulfolobus islandicus)).